A 442-amino-acid chain; its full sequence is UDP-N-acetylmuramate--L-alanine ligase (442 aa).

109-115 serves as a coordination point for ATP; it reads GAHGKTS.

The protein belongs to the MurCDEF family.

It is found in the cytoplasm. The catalysed reaction is UDP-N-acetyl-alpha-D-muramate + L-alanine + ATP = UDP-N-acetyl-alpha-D-muramoyl-L-alanine + ADP + phosphate + H(+). It functions in the pathway cell wall biogenesis; peptidoglycan biosynthesis. Cell wall formation. In Streptococcus pyogenes serotype M6 (strain ATCC BAA-946 / MGAS10394), this protein is UDP-N-acetylmuramate--L-alanine ligase.